Consider the following 937-residue polypeptide: Bifunctional glutamine synthetase adenylyltransferase/adenylyl-removing enzyme (937 aa).

The interval 1-436 (MSQPIPSASP…AAEFAELLAP (436 aa)) is adenylyl removase. An adenylyl transferase region spans residues 443–937 (PDTLADYWRA…QLRFQPGKGA (495 aa)).

It belongs to the GlnE family. Requires Mg(2+) as cofactor.

The catalysed reaction is [glutamine synthetase]-O(4)-(5'-adenylyl)-L-tyrosine + phosphate = [glutamine synthetase]-L-tyrosine + ADP. It carries out the reaction [glutamine synthetase]-L-tyrosine + ATP = [glutamine synthetase]-O(4)-(5'-adenylyl)-L-tyrosine + diphosphate. Involved in the regulation of glutamine synthetase GlnA, a key enzyme in the process to assimilate ammonia. When cellular nitrogen levels are high, the C-terminal adenylyl transferase (AT) inactivates GlnA by covalent transfer of an adenylyl group from ATP to specific tyrosine residue of GlnA, thus reducing its activity. Conversely, when nitrogen levels are low, the N-terminal adenylyl removase (AR) activates GlnA by removing the adenylyl group by phosphorolysis, increasing its activity. The regulatory region of GlnE binds the signal transduction protein PII (GlnB) which indicates the nitrogen status of the cell. This is Bifunctional glutamine synthetase adenylyltransferase/adenylyl-removing enzyme from Xanthomonas campestris pv. campestris (strain B100).